The sequence spans 274 residues: Formamidopyrimidine-DNA glycosylase (274 aa).

Pro2 acts as the Schiff-base intermediate with DNA in catalysis. The active-site Proton donor is the Glu3. Catalysis depends on Lys58, which acts as the Proton donor; for beta-elimination activity. Positions 92 and 111 each coordinate DNA. The FPG-type; degenerate zinc-finger motif lies at 239–273 (HVYGREGEPCERCGTIIEKIKVAQRGTHFCPLEQR). Residue Arg263 is the Proton donor; for delta-elimination activity of the active site.

The protein belongs to the FPG family. In terms of assembly, monomer. Requires Zn(2+) as cofactor.

The enzyme catalyses Hydrolysis of DNA containing ring-opened 7-methylguanine residues, releasing 2,6-diamino-4-hydroxy-5-(N-methyl)formamidopyrimidine.. The catalysed reaction is 2'-deoxyribonucleotide-(2'-deoxyribose 5'-phosphate)-2'-deoxyribonucleotide-DNA = a 3'-end 2'-deoxyribonucleotide-(2,3-dehydro-2,3-deoxyribose 5'-phosphate)-DNA + a 5'-end 5'-phospho-2'-deoxyribonucleoside-DNA + H(+). In terms of biological role, involved in base excision repair of DNA damaged by oxidation or by mutagenic agents. Acts as a DNA glycosylase that recognizes and removes damaged bases. Has a preference for oxidized purines, such as 7,8-dihydro-8-oxoguanine (8-oxoG). Has AP (apurinic/apyrimidinic) lyase activity and introduces nicks in the DNA strand. Cleaves the DNA backbone by beta-delta elimination to generate a single-strand break at the site of the removed base with both 3'- and 5'-phosphates. The protein is Formamidopyrimidine-DNA glycosylase of Lactiplantibacillus plantarum (strain ATCC BAA-793 / NCIMB 8826 / WCFS1) (Lactobacillus plantarum).